A 38-amino-acid chain; its full sequence is Alpha-2-macroglobulin homolog (38 aa).

A cross-link (isoglutamyl cysteine thioester (Cys-Gln)) is located at residues 27–30; sequence CGEQ.

Belongs to the protease inhibitor I39 (alpha-2-macroglobulin) family. As to quaternary structure, homodimer; disulfide-linked. In terms of tissue distribution, hemolymph.

The protein localises to the secreted. In terms of biological role, is able to inhibit all four classes of proteinases by a unique 'trapping' mechanism. This protein has a peptide stretch, called the 'bait region' which contains specific cleavage sites for different proteinases. When a proteinase cleaves the bait region, a conformational change is induced in the protein which traps the proteinase. The entrapped enzyme remains active against low molecular weight substrates (activity against high molecular weight substrates is greatly reduced). Following cleavage in the bait region a thioester bond is hydrolyzed and mediates the covalent binding of the protein to the proteinase. This Homarus americanus (American lobster) protein is Alpha-2-macroglobulin homolog.